The chain runs to 83 residues: Turripeptide Lol11.1 (83 aa).

The signal sequence occupies residues 1–27 (MARQMMTVGCLILIVVLLDMMVPVFNT).

The protein belongs to the conopeptide I2-like superfamily. Contains 4 disulfide bonds. Expressed by the venom duct.

It localises to the secreted. Its function is as follows. Acts as a neurotoxin by inhibiting voltage-gated potassium channels (Kv). This chain is Turripeptide Lol11.1, found in Iotyrris olangoensis (Sea snail).